A 319-amino-acid polypeptide reads, in one-letter code: NADH-ubiquinone oxidoreductase chain 1 (319 aa).

8 helical membrane passes run leucine 3–phenylalanine 23, leucine 74–proline 94, isoleucine 106–alanine 126, threonine 149–phenylalanine 169, alanine 175–alanine 195, leucine 226–phenylalanine 246, leucine 254–valine 274, and phenylalanine 294–glycine 314.

This sequence belongs to the complex I subunit 1 family.

Its subcellular location is the mitochondrion inner membrane. It carries out the reaction a ubiquinone + NADH + 5 H(+)(in) = a ubiquinol + NAD(+) + 4 H(+)(out). Functionally, core subunit of the mitochondrial membrane respiratory chain NADH dehydrogenase (Complex I) that is believed to belong to the minimal assembly required for catalysis. Complex I functions in the transfer of electrons from NADH to the respiratory chain. The immediate electron acceptor for the enzyme is believed to be ubiquinone. The polypeptide is NADH-ubiquinone oxidoreductase chain 1 (MT-ND1) (Polypterus ornatipinnis (Ornate bichir)).